A 155-amino-acid polypeptide reads, in one-letter code: SsrA-binding protein (155 aa).

This sequence belongs to the SmpB family.

It localises to the cytoplasm. Functionally, required for rescue of stalled ribosomes mediated by trans-translation. Binds to transfer-messenger RNA (tmRNA), required for stable association of tmRNA with ribosomes. tmRNA and SmpB together mimic tRNA shape, replacing the anticodon stem-loop with SmpB. tmRNA is encoded by the ssrA gene; the 2 termini fold to resemble tRNA(Ala) and it encodes a 'tag peptide', a short internal open reading frame. During trans-translation Ala-aminoacylated tmRNA acts like a tRNA, entering the A-site of stalled ribosomes, displacing the stalled mRNA. The ribosome then switches to translate the ORF on the tmRNA; the nascent peptide is terminated with the 'tag peptide' encoded by the tmRNA and targeted for degradation. The ribosome is freed to recommence translation, which seems to be the essential function of trans-translation. The sequence is that of SsrA-binding protein from Moorella thermoacetica (strain ATCC 39073 / JCM 9320).